A 154-amino-acid chain; its full sequence is Interleukin-2 (154 aa).

The signal sequence occupies residues 1 to 20; that stretch reads MYRMQLLSCIALSLALVTNS. Thr-23 carries an O-linked (GalNAc...) threonine glycan. Cys-78 and Cys-126 are disulfide-bonded.

The protein belongs to the IL-2 family.

The protein localises to the secreted. Functionally, cytokine produced by activated CD4-positive helper T-cells and to a lesser extend activated CD8-positive T-cells and natural killer (NK) cells that plays pivotal roles in the immune response and tolerance. Binds to a receptor complex composed of either the high-affinity trimeric IL-2R (IL2RA/CD25, IL2RB/CD122 and IL2RG/CD132) or the low-affinity dimeric IL-2R (IL2RB and IL2RG). Interaction with the receptor leads to oligomerization and conformation changes in the IL-2R subunits resulting in downstream signaling starting with phosphorylation of JAK1 and JAK3. In turn, JAK1 and JAK3 phosphorylate the receptor to form a docking site leading to the phosphorylation of several substrates including STAT5. This process leads to activation of several pathways including STAT, phosphoinositide-3-kinase/PI3K and mitogen-activated protein kinase/MAPK pathways. Functions as a T-cell growth factor and can increase NK-cell cytolytic activity as well. Promotes strong proliferation of activated B-cells and subsequently immunoglobulin production. Plays a pivotal role in regulating the adaptive immune system by controlling the survival and proliferation of regulatory T-cells, which are required for the maintenance of immune tolerance. Moreover, participates in the differentiation and homeostasis of effector T-cell subsets, including Th1, Th2, Th17 as well as memory CD8-positive T-cells. This Macaca fascicularis (Crab-eating macaque) protein is Interleukin-2 (IL2).